Here is a 190-residue protein sequence, read N- to C-terminus: uncharacterized protein (190 aa).

The 58-residue stretch at 1-58 (MDKRILAETFRLIKQKGFSFTMNDLAAALGTSKRTLYAYYSSKDQLVEAVVEQFIAEM) folds into the HTH tetR-type domain. The H-T-H motif DNA-binding region spans 21-40 (TMNDLAAALGTSKRTLYAYY).

This is an uncharacterized protein from Bacillus subtilis (strain 168).